The chain runs to 443 residues: Serine/threonine-protein kinase SSN3 (443 aa).

A disordered region spans residues 1-24 (MERKRGREMNPPSADPPSATPVAR). The Protein kinase domain occupies 54–384 (YKIVGFISSG…AEKALEHRYF (331 aa)). ATP is bound by residues 60-68 (ISSGTYGRV) and lysine 84. Aspartate 185 functions as the Proton acceptor in the catalytic mechanism. Residues 405–443 (RRVSQEDNDIRTSSLPGTKRSGLPDDSLMGRPAKRLKEG) form a disordered region.

It belongs to the protein kinase superfamily. CMGC Ser/Thr protein kinase family. CDC2/CDKX subfamily. Component of the srb8-11 complex, a regulatory module of the Mediator complex. Requires Mg(2+) as cofactor.

The protein localises to the nucleus. The enzyme catalyses L-seryl-[protein] + ATP = O-phospho-L-seryl-[protein] + ADP + H(+). It catalyses the reaction L-threonyl-[protein] + ATP = O-phospho-L-threonyl-[protein] + ADP + H(+). The catalysed reaction is [DNA-directed RNA polymerase] + ATP = phospho-[DNA-directed RNA polymerase] + ADP + H(+). Functionally, component of the srb8-11 complex. The srb8-11 complex is a regulatory module of the Mediator complex which is itself dependent transcription. The srb8-11 complex may be involved in the transcriptional repression of a subset of genes regulated by Mediator. It may inhibit the association of the Mediator complex with RNA polymerase II to form the holoenzyme complex. The srb8-11 complex phosphorylates the C-terminal domain (CTD) of the largest subunit of RNA polymerase II. This is Serine/threonine-protein kinase SSN3 (SSN3) from Phaeosphaeria nodorum (strain SN15 / ATCC MYA-4574 / FGSC 10173) (Glume blotch fungus).